Here is a 564-residue protein sequence, read N- to C-terminus: Pyruvate decarboxylase (564 aa).

The pyruvate site is built by Asp-28 and His-115. Residues Thr-390 and 413-415 (GSI) contribute to the thiamine diphosphate site. Asp-444 lines the Mg(2+) pocket. Residues 445–446 (GS) and 471–476 (NDGYTI) contribute to the thiamine diphosphate site. Positions 471 and 473 each coordinate Mg(2+). Glu-477 serves as a coordination point for pyruvate.

It belongs to the TPP enzyme family. As to quaternary structure, homotetramer. Mg(2+) is required as a cofactor. It depends on thiamine diphosphate as a cofactor.

It catalyses the reaction a 2-oxocarboxylate + H(+) = an aldehyde + CO2. The enzyme catalyses pyruvate + H(+) = acetaldehyde + CO2. The chain is Pyruvate decarboxylase (PDC1) from Kluyveromyces marxianus (Yeast).